Here is a 373-residue protein sequence, read N- to C-terminus: Putative C-P lyase subunit protein HtxH (373 aa).

It belongs to the PhnI family.

In terms of biological role, belongs to an operon involved in hypophosphite oxidation. Exact function not known. The sequence is that of Putative C-P lyase subunit protein HtxH (htxH) from Stutzerimonas stutzeri (Pseudomonas stutzeri).